Consider the following 232-residue polypeptide: Peptidyl-prolyl cis-trans isomerase FKBP18, chloroplastic (232 aa).

Positions 108–226 (GSTAQVHFDC…ELNIELLRVT (119 aa)) constitute a PPIase FKBP-type domain.

Belongs to the FKBP-type PPIase family.

The protein resides in the plastid. Its subcellular location is the chloroplast thylakoid lumen. The catalysed reaction is [protein]-peptidylproline (omega=180) = [protein]-peptidylproline (omega=0). In terms of biological role, PPIases accelerate the folding of proteins. It catalyzes the cis-trans isomerization of proline imidic peptide bonds in oligopeptides. The sequence is that of Peptidyl-prolyl cis-trans isomerase FKBP18, chloroplastic (FKBP18) from Arabidopsis thaliana (Mouse-ear cress).